The primary structure comprises 274 residues: Shikimate dehydrogenase (NADP(+)) (274 aa).

Shikimate-binding positions include 14-16 (SKS) and threonine 60. Lysine 64 functions as the Proton acceptor in the catalytic mechanism. Residue glutamate 76 participates in NADP(+) binding. Shikimate is bound by residues asparagine 85 and aspartate 101. NADP(+)-binding positions include 126–130 (GAGGA), 150–155 (NRTAEK), and methionine 214. Tyrosine 216 serves as a coordination point for shikimate. Residue glycine 238 participates in NADP(+) binding.

It belongs to the shikimate dehydrogenase family. As to quaternary structure, homodimer.

The enzyme catalyses shikimate + NADP(+) = 3-dehydroshikimate + NADPH + H(+). It participates in metabolic intermediate biosynthesis; chorismate biosynthesis; chorismate from D-erythrose 4-phosphate and phosphoenolpyruvate: step 4/7. Functionally, involved in the biosynthesis of the chorismate, which leads to the biosynthesis of aromatic amino acids. Catalyzes the reversible NADPH linked reduction of 3-dehydroshikimate (DHSA) to yield shikimate (SA). The polypeptide is Shikimate dehydrogenase (NADP(+)) (Pseudomonas paraeruginosa (strain DSM 24068 / PA7) (Pseudomonas aeruginosa (strain PA7))).